Consider the following 383-residue polypeptide: Queuine tRNA-ribosyltransferase (383 aa).

Catalysis depends on D95, which acts as the Proton acceptor. Substrate is bound by residues 95–99, D149, Q195, and G222; that span reads DSGGF. The tract at residues 253–259 is RNA binding; sequence GVGSPDS. D272 (nucleophile) is an active-site residue. The interval 277-281 is RNA binding; important for wobble base 34 recognition; the sequence is TRIAR. Zn(2+) is bound by residues C310, C312, C315, and H341.

This sequence belongs to the queuine tRNA-ribosyltransferase family. As to quaternary structure, homodimer. Within each dimer, one monomer is responsible for RNA recognition and catalysis, while the other monomer binds to the replacement base PreQ1. The cofactor is Zn(2+).

It carries out the reaction 7-aminomethyl-7-carbaguanine + guanosine(34) in tRNA = 7-aminomethyl-7-carbaguanosine(34) in tRNA + guanine. The protein operates within tRNA modification; tRNA-queuosine biosynthesis. Catalyzes the base-exchange of a guanine (G) residue with the queuine precursor 7-aminomethyl-7-deazaguanine (PreQ1) at position 34 (anticodon wobble position) in tRNAs with GU(N) anticodons (tRNA-Asp, -Asn, -His and -Tyr). Catalysis occurs through a double-displacement mechanism. The nucleophile active site attacks the C1' of nucleotide 34 to detach the guanine base from the RNA, forming a covalent enzyme-RNA intermediate. The proton acceptor active site deprotonates the incoming PreQ1, allowing a nucleophilic attack on the C1' of the ribose to form the product. After dissociation, two additional enzymatic reactions on the tRNA convert PreQ1 to queuine (Q), resulting in the hypermodified nucleoside queuosine (7-(((4,5-cis-dihydroxy-2-cyclopenten-1-yl)amino)methyl)-7-deazaguanosine). The chain is Queuine tRNA-ribosyltransferase from Shouchella clausii (strain KSM-K16) (Alkalihalobacillus clausii).